Here is a 152-residue protein sequence, read N- to C-terminus: Ribosome maturation factor RimP (152 aa).

It belongs to the RimP family.

It localises to the cytoplasm. In terms of biological role, required for maturation of 30S ribosomal subunits. The polypeptide is Ribosome maturation factor RimP (Proteus mirabilis (strain HI4320)).